Here is a 617-residue protein sequence, read N- to C-terminus: Leucine aminopeptidase 2 (617 aa).

Residues 139–141 (QCQ) and 271–276 (PYGGME) contribute to the a peptide site. Position 300 (His-300) interacts with Zn(2+). Catalysis depends on Glu-301, which acts as the Proton acceptor. Zn(2+)-binding residues include His-304 and Glu-323. Tyr-388 (proton donor) is an active-site residue.

The protein belongs to the peptidase M1 family. The cofactor is Zn(2+).

Its subcellular location is the cytoplasm. The protein localises to the nucleus. The enzyme catalyses an epoxide + H2O = an ethanediol. Aminopeptidase that preferentially cleaves di- and tripeptides. Also has low epoxide hydrolase activity (in vitro). Can hydrolyze the epoxide leukotriene LTA(4) but it forms preferentially 5,6-dihydroxy-7,9,11,14-eicosatetraenoic acid rather than the cytokine leukotriene B(4) as the product compared to the homologous mammalian enzyme (in vitro). The polypeptide is Leucine aminopeptidase 2 (Neosartorya fischeri (strain ATCC 1020 / DSM 3700 / CBS 544.65 / FGSC A1164 / JCM 1740 / NRRL 181 / WB 181) (Aspergillus fischerianus)).